Reading from the N-terminus, the 343-residue chain is Cytoplasmic tRNA 2-thiolation protein 1 (343 aa).

The protein belongs to the TtcA family. CTU1/NCS6/ATPBD3 subfamily.

The protein resides in the cytoplasm. The protein operates within tRNA modification; 5-methoxycarbonylmethyl-2-thiouridine-tRNA biosynthesis. Its function is as follows. Plays a central role in 2-thiolation of mcm(5)S(2)U at tRNA wobble positions of tRNA(Lys), tRNA(Glu) and tRNA(Gln). Directly binds tRNAs and probably acts by catalyzing adenylation of tRNAs, an intermediate required for 2-thiolation. It is unclear whether it acts as a sulfurtransferase that transfers sulfur from thiocarboxylated URM1 onto the uridine of tRNAs at wobble position. The protein is Cytoplasmic tRNA 2-thiolation protein 1 of Drosophila erecta (Fruit fly).